A 363-amino-acid polypeptide reads, in one-letter code: UDP-N-acetylglucosamine--N-acetylmuramyl-(pentapeptide) pyrophosphoryl-undecaprenol N-acetylglucosamine transferase (363 aa).

Residues 12 to 14 (TAG), Arg-166, Ser-196, and Gln-291 each bind UDP-N-acetyl-alpha-D-glucosamine.

This sequence belongs to the glycosyltransferase 28 family. MurG subfamily.

It localises to the cell inner membrane. The catalysed reaction is di-trans,octa-cis-undecaprenyl diphospho-N-acetyl-alpha-D-muramoyl-L-alanyl-D-glutamyl-meso-2,6-diaminopimeloyl-D-alanyl-D-alanine + UDP-N-acetyl-alpha-D-glucosamine = di-trans,octa-cis-undecaprenyl diphospho-[N-acetyl-alpha-D-glucosaminyl-(1-&gt;4)]-N-acetyl-alpha-D-muramoyl-L-alanyl-D-glutamyl-meso-2,6-diaminopimeloyl-D-alanyl-D-alanine + UDP + H(+). The protein operates within cell wall biogenesis; peptidoglycan biosynthesis. Its function is as follows. Cell wall formation. Catalyzes the transfer of a GlcNAc subunit on undecaprenyl-pyrophosphoryl-MurNAc-pentapeptide (lipid intermediate I) to form undecaprenyl-pyrophosphoryl-MurNAc-(pentapeptide)GlcNAc (lipid intermediate II). The chain is UDP-N-acetylglucosamine--N-acetylmuramyl-(pentapeptide) pyrophosphoryl-undecaprenol N-acetylglucosamine transferase from Legionella pneumophila (strain Paris).